We begin with the raw amino-acid sequence, 213 residues long: Thymidylate kinase (213 aa).

Position 10–17 (10–17) interacts with ATP; that stretch reads GLEGAGKT.

This sequence belongs to the thymidylate kinase family.

The enzyme catalyses dTMP + ATP = dTDP + ADP. Functionally, phosphorylation of dTMP to form dTDP in both de novo and salvage pathways of dTTP synthesis. The chain is Thymidylate kinase from Escherichia coli O6:K15:H31 (strain 536 / UPEC).